The primary structure comprises 363 residues: NAD(P)H-quinone oxidoreductase subunit 1, chloroplastic (363 aa).

Transmembrane regions (helical) follow at residues leucine 30–leucine 50, phenylalanine 98–phenylalanine 118, leucine 127–methionine 147, alanine 165–leucine 185, phenylalanine 203–leucine 223, tyrosine 248–serine 268, valine 300–isoleucine 320, and leucine 336–threonine 356.

Belongs to the complex I subunit 1 family. In terms of assembly, NDH is composed of at least 16 different subunits, 5 of which are encoded in the nucleus.

It is found in the plastid. The protein resides in the chloroplast thylakoid membrane. The enzyme catalyses a plastoquinone + NADH + (n+1) H(+)(in) = a plastoquinol + NAD(+) + n H(+)(out). The catalysed reaction is a plastoquinone + NADPH + (n+1) H(+)(in) = a plastoquinol + NADP(+) + n H(+)(out). In terms of biological role, NDH shuttles electrons from NAD(P)H:plastoquinone, via FMN and iron-sulfur (Fe-S) centers, to quinones in the photosynthetic chain and possibly in a chloroplast respiratory chain. The immediate electron acceptor for the enzyme in this species is believed to be plastoquinone. Couples the redox reaction to proton translocation, and thus conserves the redox energy in a proton gradient. In Nicotiana tomentosiformis (Tobacco), this protein is NAD(P)H-quinone oxidoreductase subunit 1, chloroplastic.